The following is a 182-amino-acid chain: Ribosome-recycling factor (182 aa).

It belongs to the RRF family.

The protein resides in the cytoplasm. Functionally, responsible for the release of ribosomes from messenger RNA at the termination of protein biosynthesis. May increase the efficiency of translation by recycling ribosomes from one round of translation to another. The protein is Ribosome-recycling factor of Prochlorococcus marinus (strain MIT 9515).